A 343-amino-acid chain; its full sequence is Dual oxidase maturation factor 1 (343 aa).

The Extracellular segment spans residues Met1 to Leu24. Residues Ala25–Ile45 form a helical membrane-spanning segment. Residues Arg46–Leu51 are Cytoplasmic-facing. A helical transmembrane segment spans residues Phe52–Phe72. At Ser73–Met183 the chain is on the extracellular side. N-linked (GlcNAc...) asparagine glycans are attached at residues Asn84, Asn109, and Asn121. The helical transmembrane segment at Leu184–Val204 threads the bilayer. The Cytoplasmic segment spans residues Tyr205–Gly206. The chain crosses the membrane as a helical span at residues Gly207–Ala227. At Thr228–Pro249 the chain is on the extracellular side. A helical membrane pass occupies residues Ala250–Val270. Residues Ala271–Leu343 are Cytoplasmic-facing. Residues Arg306–Leu343 form a disordered region. Residues Tyr330 to Leu343 show a composition bias toward basic and acidic residues.

The protein belongs to the DUOXA family. May interact with NUMB. Specifically expressed in thyroid gland. Also detected in esophagus.

Its subcellular location is the membrane. Its function is as follows. May be required for the maturation and the transport from the endoplasmic reticulum to the plasma membrane of functional DUOX1. The sequence is that of Dual oxidase maturation factor 1 (DUOXA1) from Homo sapiens (Human).